Reading from the N-terminus, the 153-residue chain is Ribosome maturation factor RimP (153 aa).

It belongs to the RimP family.

It is found in the cytoplasm. Functionally, required for maturation of 30S ribosomal subunits. The chain is Ribosome maturation factor RimP from Burkholderia pseudomallei (strain 1710b).